Consider the following 2187-residue polypeptide: Non-reducing polyketide synthase phnA (2187 aa).

The N-terminal acylcarrier protein transacylase domain (SAT) stretch occupies residues 17–255 (LLFGDLSLAH…KYLDIDSPYH (239 aa)). The 437-residue stretch at 383 to 819 (HSKIAIVGYS…GGNTAMLIED (437 aa)) folds into the Ketosynthase family 3 (KS3) domain. Catalysis depends on for beta-ketoacyl synthase activity residues C555, H690, and H735. The interval 926 to 1226 (RVAFAFTGQG…GMVKGTIDSR (301 aa)) is malonyl-CoA:ACP transacylase (MAT) domain. S1021 functions as the For acyl/malonyl transferase activity in the catalytic mechanism. A product template (PT) domain region spans residues 1321–1637 (PCAQQIVEEF…PRRALDHLLP (317 aa)). An N-terminal hotdog fold region spans residues 1324–1458 (QQIVEEFHDS…LDVVLYPGQQ (135 aa)). Residues 1324 to 1633 (QQIVEEFHDS…FQGVPRRALD (310 aa)) form the PKS/mFAS DH domain. The active-site Proton acceptor; for dehydratase activity is the H1356. The segment at 1486 to 1633 (TETHLIKRGM…FQGVPRRALD (148 aa)) is C-terminal hotdog fold. D1546 acts as the Proton donor; for dehydratase activity in catalysis. Low complexity predominate over residues 1652 to 1669 (KAPVAAVAPPRTPTKAAP). Residues 1652-1681 (KAPVAAVAPPRTPTKAAPQSRQAAPKQKRS) are disordered. Carrier domains follow at residues 1684–1758 (SDVF…SNSD) and 1796–1874 (SSES…YNVM). Position 1718 is an O-(pantetheine 4'-phosphoryl)serine (S1718). The interval 1754–1796 (LSNSDEDDTPSGDSSTYEDSESQITSPASSVGPETPGGGEFGS) is disordered. Over residues 1757 to 1774 (SDEDDTPSGDSSTYEDSE) the composition is skewed to acidic residues. At S1834 the chain carries O-(pantetheine 4'-phosphoryl)serine. Positions 1906–2183 (SSLPQATSIL…PEMGEAVAEF (278 aa)) are thioesterase (TE) domain. Residue S2009 is the For thioesterase activity of the active site.

It catalyses the reaction 6 malonyl-CoA + acetyl-CoA + 5 H(+) = 3,6,7,9-tetrahydroxy-3-methyl-2,3-dihydro-1H-naphtho[2,1-b]pyran-1-one + 6 CO2 + 7 CoA + H2O. The protein operates within secondary metabolite biosynthesis. Functionally, non-reducing polyketide synthase; part of the gene cluster that mediates the biosynthesis of phenalenones such as herqueinone, compounds that have been reported to treat tumors, bacterial infections and/or mycoses, and rheumatic diseases. The non-reducing polyketide synthase phnA synthesizes the heptaketide backbone and cyclizes it into the angular, hemiketal-containing naphtho-gamma-pyrone prephenalenone. The product template (PT) domain of phnA catalyzes only the C4-C9 aldol condensation, which is unprecedented among known PT domains. The transformation of prephenalenone to phenalenones requires an FAD-dependent monooxygenase phnB, which catalyzes the C2 aromatic hydroxylation of prephenalenone and ring opening of the gamma-pyrone ring simultaneously. Subsequent intramolecular deprotonation of C3 phenolic oxygen accelerates phenalenone ring closure to yield the tricyclic phenalenone core with a C2 hydroxylation. The prenyltransferase phnF further catalyzes reverse C-prenylation of phenalenone by direct electrophilic substitution at C6, or possibly via first a forward O-prenylation of a neighboring phenol in phenalenone, followed by a Claisen rearrangement. The hydroalkoxylation enzyme phnH catalyzes the 5-exo-trig cyclization via acid catalysis after the spontaneous deprotonation of 7-OH, which leads to the formation of the dihydrobenzofuran atrovenetin. Atrovenetin is further converted to deoxyherqueinone by the O-methyltransferase phnC which can methylate C2-OH to stabilize the northern portion of the phenalenone core. Finally, the oxidoreductase phnG converts deoxyherqueinone to herqueinone via C6 hydroxylation. In Penicillium herquei, this protein is Non-reducing polyketide synthase phnA.